Consider the following 155-residue polypeptide: MRMYETIFITDPDLQDEVRNTLFDRFKGILEQEGGILANFDDWGNKKLAYEIAKKPRGHYVCMTYGGTGTLVTELERNFRLDDKILKYMTILLEKDIDPEALKLQIDAEAAAKSEADAAKAEADAARVEAEAKKAETDETDETVDAETPENEEEN.

The segment covering 115-137 (EADAAKAEADAARVEAEAKKAET) has biased composition (basic and acidic residues). Residues 115–155 (EADAAKAEADAARVEAEAKKAETDETDETVDAETPENEEEN) are disordered. Positions 138-155 (DETDETVDAETPENEEEN) are enriched in acidic residues.

Belongs to the bacterial ribosomal protein bS6 family.

Its function is as follows. Binds together with bS18 to 16S ribosomal RNA. This chain is Small ribosomal subunit protein bS6, found in Desulforapulum autotrophicum (strain ATCC 43914 / DSM 3382 / VKM B-1955 / HRM2) (Desulfobacterium autotrophicum).